The primary structure comprises 207 residues: GTP cyclohydrolase 1 (207 aa).

Residues cysteine 88, histidine 91, and cysteine 162 each coordinate Zn(2+).

This sequence belongs to the GTP cyclohydrolase I family. In terms of assembly, toroid-shaped homodecamer, composed of two pentamers of five dimers.

It carries out the reaction GTP + H2O = 7,8-dihydroneopterin 3'-triphosphate + formate + H(+). Its pathway is cofactor biosynthesis; 7,8-dihydroneopterin triphosphate biosynthesis; 7,8-dihydroneopterin triphosphate from GTP: step 1/1. This is GTP cyclohydrolase 1 from Sulfurisphaera tokodaii (strain DSM 16993 / JCM 10545 / NBRC 100140 / 7) (Sulfolobus tokodaii).